We begin with the raw amino-acid sequence, 163 residues long: Nucleotide-binding protein NFA_51200 (163 aa).

This sequence belongs to the YajQ family.

Its function is as follows. Nucleotide-binding protein. In Nocardia farcinica (strain IFM 10152), this protein is Nucleotide-binding protein NFA_51200.